The primary structure comprises 530 residues: Ubiquitin carboxyl-terminal hydrolase 17-like protein 19 (530 aa).

The 296-residue stretch at 80–375 folds into the USP domain; sequence AGLQNMGNTC…QAYVLFYIQK (296 aa). The active-site Nucleophile is Cys-89. His-334 functions as the Proton acceptor in the catalytic mechanism. Basic and acidic residues-rich tracts occupy residues 382-392 and 398-413; these read SESVSRGREPR and DTDR…RDHP. Disordered regions lie at residues 382-413 and 476-530; these read SESV…RDHP and KNHH…LVCQ. Positions 484 to 495 are enriched in low complexity; it reads SSLLKLSSTTPT. Positions 496–505 are enriched in polar residues; it reads HQESMNTGTL. Positions 510–524 are enriched in basic residues; it reads GRARRSKGKNKHSKR.

It belongs to the peptidase C19 family. USP17 subfamily.

Its subcellular location is the nucleus. The protein localises to the endoplasmic reticulum. It carries out the reaction Thiol-dependent hydrolysis of ester, thioester, amide, peptide and isopeptide bonds formed by the C-terminal Gly of ubiquitin (a 76-residue protein attached to proteins as an intracellular targeting signal).. Functionally, deubiquitinating enzyme that removes conjugated ubiquitin from specific proteins to regulate different cellular processes that may include cell proliferation, progression through the cell cycle, apoptosis, cell migration, and the cellular response to viral infection. This chain is Ubiquitin carboxyl-terminal hydrolase 17-like protein 19 (USP17L19), found in Homo sapiens (Human).